A 60-amino-acid chain; its full sequence is UPF0337 protein asr1134 (60 aa).

Basic and acidic residues-rich tracts occupy residues 1–18 (MSLE…EGKA) and 29–60 (PEDK…KKID). The interval 1–60 (MSLEDRAKATGKNIEGKAQEALGNVTGDPEDKAEGKAKQAESEVRHGVEDVKDNVKKKID) is disordered.

The protein belongs to the UPF0337 (CsbD) family.

The sequence is that of UPF0337 protein asr1134 from Nostoc sp. (strain PCC 7120 / SAG 25.82 / UTEX 2576).